A 677-amino-acid chain; its full sequence is MGSGYQLLQLPRERFRKTSFLVWVIILFQRAISMPLGIVTNSTLKATEIDQLVCRDKLSSTSQLKSVGLNLEGNGIATDVPSATKRWGFRSGVPPKVVSYEAGEWAENCYNLEIKKSDGSECLPLPPDGVRGFPRCRYVHKVQGTGPCPGDLAFHKNGAFFLYDRLASTVIYRGTTFAEGVVAFLILSEPKKHFWKATPAHEPVNTTDDSTSYYMTLTLSYEMSNFGGNESNTLFKVDNHTYVQLDRPHTPQFLVQLNETLRRNNRLSNSTGRLTWTLDPKIEPDVGEWAFWETKKNFSQQLHGENLHFQILSTHTNNSSDQSPAGTVQGKISYHPPANNSELVPTDSPPVVSVLTAGRTEEMSTQGLTNGETITGFTANPMTTTIAPSPTMTSEVDNNVPSEQPNNTASIEDSPPSASNETIYHSEMDPIQGSNNSAQSPQTKTTPAPTTSPMTQDPQETANSSKPGTSPGSAAGPSQPGLTINTVSKVADSLSPTRKQKRSVRQNTANKCNPDLYYWTAVDEGAAVGLAWIPYFGPAAEGIYIEGVMHNQNGLICGLRQLANETTQALQLFLRATTELRTYSLLNRKAIDFLLQRWGGTCRILGPSCCIEPHDWTKNITDEINQIKHDFIDNPLPDHGDDLNLWTGWRQWIPAGIGIIGVIIAIIALLCICKILC.

The signal sequence occupies residues 1 to 33 (MGSGYQLLQLPRERFRKTSFLVWVIILFQRAIS). Residues 34-651 (MPLGIVTNST…DLNLWTGWRQ (618 aa)) are Extracellular-facing. Residue Asn41 is glycosylated (N-linked (GlcNAc...) asparagine; by host). 5 cysteine pairs are disulfide-bonded: Cys54-Cys610, Cys109-Cys136, Cys122-Cys148, Cys512-Cys557, and Cys602-Cys609. The interval 55–202 (RDKLSSTSQL…HFWKATPAHE (148 aa)) is receptor-binding. N-linked (GlcNAc...) asparagine; by host glycosylation is found at Asn205, Asn229, Asn239, Asn258, Asn269, Asn297, Asn317, Asn318, Asn339, Asn406, Asn420, Asn435, and Asn463. The mucin-like region stretch occupies residues 306–486 (NLHFQILSTH…PSQPGLTINT (181 aa)). The segment covering 315 to 326 (HTNNSSDQSPAG) has biased composition (polar residues). Disordered regions lie at residues 315-349 (HTNN…TDSP) and 361-484 (EEMS…GLTI). Polar residues-rich tracts occupy residues 363-423 (MSTQ…NETI) and 432-472 (QGSN…TSPG). The tract at residues 525–540 (GAAVGLAWIPYFGPAA) is fusion peptide. A coiled-coil region spans residues 555 to 596 (LICGLRQLANETTQALQLFLRATTELRTYSLLNRKAIDFLLQ). Asn564 carries N-linked (GlcNAc...) asparagine; by host glycosylation. Residues 616 to 635 (WTKNITDEINQIKHDFIDNP) adopt a coiled-coil conformation. N-linked (GlcNAc...) asparagine; by host glycosylation is present at Asn619. A helical transmembrane segment spans residues 652-672 (WIPAGIGIIGVIIAIIALLCI). S-palmitoyl cysteine; by host attachment occurs at residues Cys671 and Cys673. The Cytoplasmic segment spans residues 673–677 (CKILC).

Belongs to the filoviruses glycoprotein family. As to quaternary structure, homotrimer; each monomer consists of a GP1 and a GP2 subunit linked by disulfide bonds. The resulting peplomers (GP1,2) protrude from the virus surface as spikes. Interacts with host integrin alpha-V/ITGAV. Interacts with host CLEC10A. Binds also to host CD209 and CLEC4M/DC-SIGN(R). Interacts with host FOLR1. Interacts with BST2; this interaction inhibits the antiviral effect of BST2 and this allows viral release from infected cells. Interacts with host FCN1; this interaction enhances viral entry. Interacts with host TLR4; this interaction induces cell death in T-lymphocytes or proinflammatory cytokines and SOCS1 production in monocytes. Interacts with host entry receptor NPC1. In terms of assembly, GP1 and GP2delta are part of GP1,2delta soluble complexes released by ectodomain shedding. The signal peptide region modulates GP's high mannose glycosylation, thereby determining the efficiency of the interactions with DC-SIGN(R). Post-translationally, N-glycosylated. In terms of processing, O-glycosylated in the mucin-like region. Palmitoylation of GP2 is not required for its function. Post-translationally, specific enzymatic cleavages in vivo yield mature proteins. The precursor is processed into GP1 and GP2 by host cell furin in the trans Golgi, and maybe by other host proteases, to yield the mature GP1 and GP2 proteins. The cleavage site corresponds to the furin optimal cleavage sequence [KR]-X-[KR]-R. This cleavage does not seem to be required for function. After the internalization of the virus into cell endosomes, GP1 C-terminus is removed by the endosomal proteases cathepsin B, cathepsin L, or both, leaving a 19-kDa N-terminal fragment which is further digested by cathepsin B. Proteolytic processing of GP1,2 by host ADAM17 can remove the transmembrane anchor of GP2 and leads to shedding of complexes consisting in GP1 and truncated GP2 (GP1,2delta).

It is found in the virion membrane. The protein resides in the host cell membrane. Its subcellular location is the secreted. Trimeric GP1,2 complexes form the virion surface spikes and mediate the viral entry processes, with GP1 acting as the receptor-binding subunit and GP2 as the membrane fusion subunit. At later times of infection, down-regulates the expression of various host cell surface molecules that are essential for immune surveillance and cell adhesion. Down-modulates several integrins including ITGA1, ITGA2, ITGA3, ITGA4, ITGA5, ITGA6, ITGAV and ITGB1. This decrease in cell adhesion molecules may lead to cell detachment, contributing to the disruption of blood vessel integrity and hemorrhages developed during infection (cytotoxicity). Interacts with host TLR4 and thereby stimulates the differentiation and activation of monocytes leading to bystander death of T-lymphocytes. Down-regulates as well the function of host natural killer cells. Counteracts the antiviral effect of host BST2/tetherin that restricts release of progeny virions from infected cells. However, cooperates with VP40 and host BST2 to activate canonical NF-kappa-B pathway in a manner dependent on neddylation. Its function is as follows. Functions as a decoy for anti-GP1,2 antibodies thereby contributing to viral immune evasion. Interacts and activates host macrophages and dendritic cells inducing up-regulation of cytokine transcription. This effect is mediated throught activation of host TLR4. In terms of biological role, responsible for binding to the receptor(s) on target cells. Interacts with CD209/DC-SIGN and CLEC4M/DC-SIGNR which act as cofactors for virus entry into dendritic cells (DCs) and endothelial cells. Binding to the macrophage specific lectin CLEC10A also seems to enhance virus infectivity. Interaction with FOLR1/folate receptor alpha may be a cofactor for virus entry in some cell types, although results are contradictory. Members of the Tyro3 receptor tyrosine kinase family also seem to be cell entry factors in filovirus infection. Once attached, the virions are internalized through clathrin-dependent endocytosis and/or macropinocytosis. After internalization of the virus into the endosomes of the host cell, proteolysis of GP1 by two cysteine proteases, CTSB/cathepsin B and CTSL/cathepsin L removes the glycan cap and allows GP1 binding to the host entry receptor NPC1. NPC1-binding, Ca(2+) and acidic pH induce a conformational change of GP2, which unmasks its fusion peptide and permit membranes fusion. Functionally, acts as a class I viral fusion protein. Under the current model, the protein has at least 3 conformational states: pre-fusion native state, pre-hairpin intermediate state, and post-fusion hairpin state. During viral and target cell membrane fusion, the coiled coil regions (heptad repeats) assume a trimer-of-hairpins structure, positioning the fusion peptide in close proximity to the C-terminal region of the ectodomain. The formation of this structure appears to drive apposition and subsequent fusion of viral and target cell membranes. Responsible for penetration of the virus into the cell cytoplasm by mediating the fusion of the membrane of the endocytosed virus particle with the endosomal membrane. Low pH in endosomes induces an irreversible conformational change in GP2, releasing the fusion hydrophobic peptide. This Reston ebolavirus (strain Reston-89) (REBOV) protein is Envelope glycoprotein (GP).